Reading from the N-terminus, the 146-residue chain is Large ribosomal subunit protein uL15 (146 aa).

The interval 1–66 (MKLHELKPAP…LQRRMPKRGF (66 aa)) is disordered. Gly residues-rich tracts occupy residues 21–31 (QGIGSGMGKTA) and 42–52 (SGGGVRPGFEG).

The protein belongs to the universal ribosomal protein uL15 family. Part of the 50S ribosomal subunit.

Functionally, binds to the 23S rRNA. This chain is Large ribosomal subunit protein uL15, found in Pelotomaculum thermopropionicum (strain DSM 13744 / JCM 10971 / SI).